Consider the following 493-residue polypeptide: Exosome complex component Rrp41 (493 aa).

Disordered stretches follow at residues valine 244 to valine 264 and leucine 291 to glutamate 493. The segment covering alanine 249–leucine 259 has biased composition (basic and acidic residues). The span at proline 297–alanine 377 shows a compositional bias: acidic residues. The span at proline 383 to alanine 400 shows a compositional bias: basic and acidic residues. Acidic residues predominate over residues serine 401–lysine 471. A compositionally biased stretch (basic and acidic residues) spans serine 472–glutamate 493.

This sequence belongs to the RNase PH family. Rrp41 subfamily. Component of the archaeal exosome complex. Forms a hexameric ring-like arrangement composed of 3 Rrp41-Rrp42 heterodimers. The hexameric ring associates with a trimer of Rrp4 and/or Csl4 subunits.

The protein localises to the cytoplasm. Its function is as follows. Catalytic component of the exosome, which is a complex involved in RNA degradation. Has 3'-&gt;5' exoribonuclease activity. Can also synthesize heteromeric RNA-tails. The sequence is that of Exosome complex component Rrp41 from Methanosarcina mazei (strain ATCC BAA-159 / DSM 3647 / Goe1 / Go1 / JCM 11833 / OCM 88) (Methanosarcina frisia).